We begin with the raw amino-acid sequence, 506 residues long: Cobyric acid synthase (506 aa).

The GATase cobBQ-type domain occupies 260–453 (KVGVAAIYFP…FHGIFNEPAV (194 aa)). The Nucleophile role is filled by C341. The active site involves H445.

This sequence belongs to the CobB/CobQ family. CobQ subfamily.

The protein operates within cofactor biosynthesis; adenosylcobalamin biosynthesis. Catalyzes amidations at positions B, D, E, and G on adenosylcobyrinic A,C-diamide. NH(2) groups are provided by glutamine, and one molecule of ATP is hydrogenolyzed for each amidation. This is Cobyric acid synthase from Chlorobium chlorochromatii (strain CaD3).